A 375-amino-acid chain; its full sequence is DNA replication and repair protein RecF (375 aa).

34–41 (GDNGAGKT) provides a ligand contact to ATP.

The protein belongs to the RecF family.

The protein localises to the cytoplasm. In terms of biological role, the RecF protein is involved in DNA metabolism; it is required for DNA replication and normal SOS inducibility. RecF binds preferentially to single-stranded, linear DNA. It also seems to bind ATP. The chain is DNA replication and repair protein RecF from Rhizobium rhizogenes (strain K84 / ATCC BAA-868) (Agrobacterium radiobacter).